The sequence spans 412 residues: F-box/WD repeat-containing protein 4 (412 aa).

The 47-residue stretch at 25–71 (GPALWRLPEELLLLICSYLDMRALGRLAQVCRWLRRFTSCDLLWRRI) folds into the F-box domain. WD repeat units lie at residues 154-190 (RPLGVFAGHDEDVCHFVLANSHIVSAGGDGKIGIHKI), 193-229 (TFTVKYSAHEQEVNCVDCKGGIIVSGSRDRTAKVWPL), 236-277 (QCLH…IWDL), 283-321 (MTHLGSDFPPGAGVLDVMYESPFTLLSCGYDTYVRYWDL), 327-366 (KCVMEWEEPHDSTLYCLQTDGNHLLATGSSYYGVVRLWDR), and 373-409 (HAFPLTSTPLSSPVYCLRLTTKHLYAALSYNLHVLDF).

Part of a SCF (SKP1-cullin-F-box) protein ligase complex. Interacts with POUF51. In terms of tissue distribution, expressed in brain, kidney, lung and liver.

In terms of biological role, probably recognizes and binds to some phosphorylated proteins and promotes their ubiquitination and degradation. Likely to be involved in key signaling pathways crucial for normal limb development. May participate in Wnt signaling. The chain is F-box/WD repeat-containing protein 4 (FBXW4) from Homo sapiens (Human).